The primary structure comprises 496 residues: Cobyric acid synthase (496 aa).

One can recognise a GATase cobBQ-type domain in the interval 258-427; sequence TLTVAAIRLP…WHGLLDNDAL (170 aa). Residue Cys339 is the Nucleophile of the active site. His419 is a catalytic residue.

It belongs to the CobB/CobQ family. CobQ subfamily.

It functions in the pathway cofactor biosynthesis; adenosylcobalamin biosynthesis. Its function is as follows. Catalyzes amidations at positions B, D, E, and G on adenosylcobyrinic A,C-diamide. NH(2) groups are provided by glutamine, and one molecule of ATP is hydrogenolyzed for each amidation. In Mycolicibacterium smegmatis (strain ATCC 700084 / mc(2)155) (Mycobacterium smegmatis), this protein is Cobyric acid synthase.